A 224-amino-acid polypeptide reads, in one-letter code: MARRPGSSSRGPARPDRLAPQAVTSARRPQTPDKSPKPASPDPSLVLLGEFGRPHGLHGEVRLKSFTGEPLAIAGYGPLHASDGRTLELEDARPAPGGSPDLLIVRVKGVDNRSGAEALNRITLAIARERLGQAEDEDEFFLTDLIGLAVEDPSGTVIGTIVAVPNYGGGDLLEIRPAAGGPTALLPFTKAFVPTLDLAGGKVVADPPEDLFAPPGPKPADDPG.

Over residues 1–12 the composition is skewed to low complexity; the sequence is MARRPGSSSRGP. Disordered stretches follow at residues 1-46 and 204-224; these read MARR…PSLV and VADP…DDPG. Positions 137–211 constitute a PRC barrel domain; the sequence is EDEFFLTDLI…KVVADPPEDL (75 aa).

Belongs to the RimM family. In terms of assembly, binds ribosomal protein uS19.

It localises to the cytoplasm. Functionally, an accessory protein needed during the final step in the assembly of 30S ribosomal subunit, possibly for assembly of the head region. Essential for efficient processing of 16S rRNA. May be needed both before and after RbfA during the maturation of 16S rRNA. It has affinity for free ribosomal 30S subunits but not for 70S ribosomes. This is Ribosome maturation factor RimM from Methylorubrum populi (strain ATCC BAA-705 / NCIMB 13946 / BJ001) (Methylobacterium populi).